The chain runs to 368 residues: DNA-directed RNA polymerase II subunit GRINL1A (368 aa).

The important for transcription repressor activity stretch occupies residues 29–68 (KRQERLLRNEKFICKLPDKGKKIFDSFAKLKAAIAECEEV). Composition is skewed to polar residues over residues 116–131 (SSVDNIKSSQTSQNQG), 205–224 (GEQQSEENASTKNLTGLSSG), and 258–273 (QNDSSSHCQKSGSPIS). Disordered stretches follow at residues 116 to 186 (SSVD…DTSS), 203 to 227 (DQGEQQSEENASTKNLTGLSSGTEK), and 255 to 282 (PFRQNDSSSHCQKSGSPISSEERRRRDK). The interval 227–298 (KKPHYMEVLE…TAARLLPLHH (72 aa)) is interaction with Pol II. The residue at position 270 (S270) is a Phosphoserine. Residues 299–314 (MPTQLLSIEESLALQK) are important for transcription repressor activity. The stretch at 301 to 335 (TQLLSIEESLALQKQQKQNYEEMQAKLAAQKLAER) forms a coiled coil. The interaction with Pol II stretch occupies residues 315–340 (QQKQNYEEMQAKLAAQKLAERLNIKM). The interval 339 to 368 (KMRSYNPEGESSGRYREVRDEDDDWSSDEF) is disordered. Positions 358–368 (DEDDDWSSDEF) are enriched in acidic residues.

The protein belongs to the GRINL1 family. In terms of assembly, component of the Pol II(G) complex, which contains the RNA polymerase II (Pol II) core complex subunits and POLR2M isoform 1. Pol II(G) appears to be an abundant form of Pol II. Post-translationally, dephosphorylated at Ser-270 by the PNUTS-PP1 complex, promoting RNA polymerase II transcription pause-release. As to expression, detected in adult an fetal brain. Detected in heart, kidney, skeletal muscle, small intestine, lung, prostate and testis.

The protein resides in the nucleus. Functionally, appears to be a stable component of the Pol II(G) complex form of RNA polymerase II (Pol II). Pol II synthesizes mRNA precursors and many functional non-coding RNAs and is the central component of the basal RNA polymerase II transcription machinery. May play a role in the Mediator complex-dependent regulation of transcription activation. Acts as a negative regulator of transcriptional activation; this repression is relieved by the Mediator complex, which restores Pol II(G) activator-dependent transcription to a level equivalent to that of Pol II. The chain is DNA-directed RNA polymerase II subunit GRINL1A (POLR2M) from Homo sapiens (Human).